The chain runs to 85 residues: Large ribosomal subunit protein bL27 (85 aa).

Belongs to the bacterial ribosomal protein bL27 family.

This is Large ribosomal subunit protein bL27 from Pseudomonas aeruginosa (strain LESB58).